A 121-amino-acid polypeptide reads, in one-letter code: Ribonuclease P protein component 4 (121 aa).

Residues cysteine 63, cysteine 66, cysteine 89, and cysteine 92 each coordinate Zn(2+).

This sequence belongs to the eukaryotic/archaeal RNase P protein component 4 family. Consists of a catalytic RNA component and at least 4-5 protein subunits. Requires Zn(2+) as cofactor.

It localises to the cytoplasm. The catalysed reaction is Endonucleolytic cleavage of RNA, removing 5'-extranucleotides from tRNA precursor.. Functionally, part of ribonuclease P, a protein complex that generates mature tRNA molecules by cleaving their 5'-ends. The chain is Ribonuclease P protein component 4 from Methanobrevibacter smithii (strain ATCC 35061 / DSM 861 / OCM 144 / PS).